The sequence spans 293 residues: Forkhead box protein N5 (293 aa).

The tract at residues 104 to 152 is disordered; sequence TSPPLQLQRQLSNDYSTVEDSEDEAPTSCSDVLTDDDDSYNPWQPKHKR. Residues 106-119 show a composition bias toward polar residues; that stretch reads PPLQLQRQLSNDYS. The segment at residues 176-273 is a DNA-binding region (fork-head); sequence RPPLNYCNLI…NEMHALSDDL (98 aa).

The protein resides in the nucleus. The polypeptide is Forkhead box protein N5 (Xenopus tropicalis (Western clawed frog)).